The following is a 331-amino-acid chain: RNA/RNP complex-1-interacting phosphatase (331 aa).

A Tyrosine-protein phosphatase domain is found at 61–208 (FEKHLAPEEC…LRNGPIRKNW (148 aa)). The active-site Phosphocysteine intermediate is the Cys-152. 153 to 158 (THGVNR) is a substrate binding site. Arg-158 serves as the catalytic Proton donor/acceptor.

The protein belongs to the protein-tyrosine phosphatase family. Non-receptor class dual specificity subfamily. In terms of assembly, monomer. May interact with SFRS7 and SFRS9/SRP30C.

It is found in the nucleus. The protein resides in the nucleus speckle. Possesses RNA 5'-triphosphatase and diphosphatase activities, but displays a poor protein-tyrosine phosphatase activity. In addition, has phosphatase activity with ATP, ADP and O-methylfluorescein phosphate (in vitro). Binds to RNA. May participate in nuclear mRNA metabolism. The polypeptide is RNA/RNP complex-1-interacting phosphatase (DUSP11) (Bos taurus (Bovine)).